The chain runs to 260 residues: Phosphatidylglycerol--prolipoprotein diacylglyceryl transferase (260 aa).

Transmembrane regions (helical) follow at residues 16–36 (LEFR…YFIV), 55–75 (VIFS…ILFY), and 87–107 (LFAV…VILA). Residue Arg138 coordinates a 1,2-diacyl-sn-glycero-3-phospho-(1'-sn-glycerol). 2 helical membrane-spanning segments follow: residues 198–218 (GVVF…VEFF) and 232–252 (FSMG…MAVL).

This sequence belongs to the Lgt family.

The protein resides in the cell inner membrane. It catalyses the reaction L-cysteinyl-[prolipoprotein] + a 1,2-diacyl-sn-glycero-3-phospho-(1'-sn-glycerol) = an S-1,2-diacyl-sn-glyceryl-L-cysteinyl-[prolipoprotein] + sn-glycerol 1-phosphate + H(+). It participates in protein modification; lipoprotein biosynthesis (diacylglyceryl transfer). Functionally, catalyzes the transfer of the diacylglyceryl group from phosphatidylglycerol to the sulfhydryl group of the N-terminal cysteine of a prolipoprotein, the first step in the formation of mature lipoproteins. This chain is Phosphatidylglycerol--prolipoprotein diacylglyceryl transferase, found in Geobacter sulfurreducens (strain ATCC 51573 / DSM 12127 / PCA).